Here is a 968-residue protein sequence, read N- to C-terminus: Probable histidine kinase 1 (968 aa).

2 coiled-coil regions span residues 89–120 (LLKEQIGLLCQQRKEIEQRKQQILEEQQFQDE) and 169–204 (KERAMQLEKTLEASLQRERSLEEKLEENIKNLQSHT). One can recognise a Histidine kinase domain in the interval 372–655 (TMSHEIRSPL…TFSFVLPCKI (284 aa)). A Phosphohistidine; by autocatalysis modification is found at histidine 375. Residues 737–757 (STNSASTAHQSNGPSVSRTNK) form a disordered region. Positions 738 to 754 (TNSASTAHQSNGPSVSR) are enriched in polar residues. The 148-residue stretch at 818–965 (KILLVEDNKV…NIKECLQQYL (148 aa)) folds into the Response regulatory domain. Aspartate 867 bears the 4-aspartylphosphate mark.

Post-translationally, activation probably requires a transfer of a phosphate group between a His in the transmitter domain and an Asp of the receiver domain.

It catalyses the reaction ATP + protein L-histidine = ADP + protein N-phospho-L-histidine.. In terms of biological role, cytokinin receptor related to bacterial two-component regulators. Functions as a histidine kinase and transmits the stress signal to a downstream MAPK cascade. This chain is Probable histidine kinase 1, found in Oryza sativa subsp. indica (Rice).